Reading from the N-terminus, the 326-residue chain is N-acetyl-gamma-glutamyl-phosphate reductase (326 aa).

C155 is an active-site residue.

The protein belongs to the NAGSA dehydrogenase family. Type 1 subfamily.

The protein localises to the cytoplasm. It carries out the reaction N-acetyl-L-glutamate 5-semialdehyde + phosphate + NADP(+) = N-acetyl-L-glutamyl 5-phosphate + NADPH + H(+). The protein operates within amino-acid biosynthesis; L-arginine biosynthesis; N(2)-acetyl-L-ornithine from L-glutamate: step 3/4. Functionally, catalyzes the NADPH-dependent reduction of N-acetyl-5-glutamyl phosphate to yield N-acetyl-L-glutamate 5-semialdehyde. The polypeptide is N-acetyl-gamma-glutamyl-phosphate reductase (Shewanella baltica (strain OS155 / ATCC BAA-1091)).